Reading from the N-terminus, the 269-residue chain is MRIALGIEYDGSRYFGWQRQREVISVQEELEKALSRIANHPVSIQCAGRTDAGVHATGQVIHFDTDANRAEGAWTLGLNSNLPPDIAVRWVKQVDEGFHARFSATARRYRYVIYNHNYRPAILGSGVSHYHETIDADLMHQAGQSLLGEHDFSTFRAVACQSNTPWRNVTHLCVSRSGPYIVLDIKANAFLHHMVRNITGSLLLVGQGLQPVEWIAEVLAARDRNLAGPTAKAGGLYLVDVDYPAELGLPQMPLGPLWLPDSAPGTTSF.

Residue aspartate 51 is the Nucleophile of the active site. Tyrosine 109 provides a ligand contact to substrate.

The protein belongs to the tRNA pseudouridine synthase TruA family. In terms of assembly, homodimer.

The enzyme catalyses uridine(38/39/40) in tRNA = pseudouridine(38/39/40) in tRNA. Its function is as follows. Formation of pseudouridine at positions 38, 39 and 40 in the anticodon stem and loop of transfer RNAs. This Aeromonas hydrophila subsp. hydrophila (strain ATCC 7966 / DSM 30187 / BCRC 13018 / CCUG 14551 / JCM 1027 / KCTC 2358 / NCIMB 9240 / NCTC 8049) protein is tRNA pseudouridine synthase A.